Reading from the N-terminus, the 79-residue chain is Conotoxin MIVA (79 aa).

A signal peptide spans Met1–Ser21. Positions Ile22–Arg38 are excised as a propeptide. Residue Pro40 is modified to 4-hydroxyproline. Position 41 is a 4-carboxyglutamate (Glu41). O-linked (HexNAc...) threonine glycosylation is found at Thr45 and Thr47. 4-hydroxyproline is present on residues Pro55, Pro60, Pro61, Pro69, Pro70, and Pro74. Residue Pro74 is modified to Proline amide. A propeptide spanning residues Gly75–Asp79 is cleaved from the precursor.

Post-translationally, O-linked glycan consists of Hex4-HexNAc2 hexasaccharide. In terms of processing, contains 3 disulfide bonds. In terms of tissue distribution, expressed by the venom duct.

It localises to the secreted. Probable neurotoxin with ion channel inhibitor activity. This chain is Conotoxin MIVA, found in Conus magus (Magical cone).